Reading from the N-terminus, the 189-residue chain is Small ribosomal subunit protein uS5 (189 aa).

The S5 DRBM domain occupies 22–85; the sequence is FVDKLVAINR…ESAKRDLIFV (64 aa).

It belongs to the universal ribosomal protein uS5 family. Part of the 30S ribosomal subunit. Contacts proteins S4 and S8.

Functionally, with S4 and S12 plays an important role in translational accuracy. Its function is as follows. Located at the back of the 30S subunit body where it stabilizes the conformation of the head with respect to the body. This chain is Small ribosomal subunit protein uS5, found in Allorhizobium ampelinum (strain ATCC BAA-846 / DSM 112012 / S4) (Agrobacterium vitis (strain S4)).